The primary structure comprises 202 residues: Urease accessory protein UreG (202 aa).

A GTP-binding site is contributed by G11–T18.

This sequence belongs to the SIMIBI class G3E GTPase family. UreG subfamily. Homodimer. UreD, UreF and UreG form a complex that acts as a GTP-hydrolysis-dependent molecular chaperone, activating the urease apoprotein by helping to assemble the nickel containing metallocenter of UreC. The UreE protein probably delivers the nickel.

Its subcellular location is the cytoplasm. Facilitates the functional incorporation of the urease nickel metallocenter. This process requires GTP hydrolysis, probably effectuated by UreG. The chain is Urease accessory protein UreG from Prochlorococcus marinus (strain MIT 9313).